A 271-amino-acid chain; its full sequence is MALTKRIIPCIDVDLNEDGEAAVYTGVNFEDLEYTGDPVELAKKYNEAGADEFVFLDITASAEGRETMLDTVSAVADECFIPLTVGGGIRTRDDIKETLRAGADKVSINTGALQRPELIGEGAEAFGSQCIVISVDARRRFDEAGEHYVEVDGESCWFECTIKGGREGTGTDVVEWAGEAADRGAGELFVNSIDADGTKDGYDIPLTKAVCDNVPTPVIASSGCGSPEHMAEVFEDADADAALAASIFHFEEYSIEETKRSLDEQGIPVRL.

Active-site residues include aspartate 12 and aspartate 136.

This sequence belongs to the HisA/HisF family. In terms of assembly, heterodimer of HisH and HisF.

It is found in the cytoplasm. The enzyme catalyses 5-[(5-phospho-1-deoxy-D-ribulos-1-ylimino)methylamino]-1-(5-phospho-beta-D-ribosyl)imidazole-4-carboxamide + L-glutamine = D-erythro-1-(imidazol-4-yl)glycerol 3-phosphate + 5-amino-1-(5-phospho-beta-D-ribosyl)imidazole-4-carboxamide + L-glutamate + H(+). It participates in amino-acid biosynthesis; L-histidine biosynthesis; L-histidine from 5-phospho-alpha-D-ribose 1-diphosphate: step 5/9. Functionally, IGPS catalyzes the conversion of PRFAR and glutamine to IGP, AICAR and glutamate. The HisF subunit catalyzes the cyclization activity that produces IGP and AICAR from PRFAR using the ammonia provided by the HisH subunit. The sequence is that of Imidazole glycerol phosphate synthase subunit HisF from Natronomonas pharaonis (strain ATCC 35678 / DSM 2160 / CIP 103997 / JCM 8858 / NBRC 14720 / NCIMB 2260 / Gabara) (Halobacterium pharaonis).